The chain runs to 306 residues: Curved DNA-binding protein (306 aa).

Positions 5 to 69 (DYYAIMGVKP…QRRAEYDQMW (65 aa)) constitute a J domain.

Its subcellular location is the cytoplasm. It localises to the nucleoid. Its function is as follows. DNA-binding protein that preferentially recognizes a curved DNA sequence. It is probably a functional analog of DnaJ; displays overlapping activities with DnaJ, but functions under different conditions, probably acting as a molecular chaperone in an adaptive response to environmental stresses other than heat shock. Lacks autonomous chaperone activity; binds native substrates and targets them for recognition by DnaK. Its activity is inhibited by the binding of CbpM. In Shigella flexneri, this protein is Curved DNA-binding protein.